We begin with the raw amino-acid sequence, 610 residues long: UvrABC system protein C (610 aa).

In terms of domain architecture, GIY-YIG spans 16–94; it reads SQPGVYRMYD…IKLYQPRYNV (79 aa). Positions 204 to 239 constitute a UVR domain; sequence DQVLTQLISRMETASQNLEFEEAARIRDQIQAVRRV.

This sequence belongs to the UvrC family. Interacts with UvrB in an incision complex.

The protein resides in the cytoplasm. Its function is as follows. The UvrABC repair system catalyzes the recognition and processing of DNA lesions. UvrC both incises the 5' and 3' sides of the lesion. The N-terminal half is responsible for the 3' incision and the C-terminal half is responsible for the 5' incision. The polypeptide is UvrABC system protein C (Escherichia coli O1:K1 / APEC).